The following is a 257-amino-acid chain: Undecaprenyl-diphosphatase (257 aa).

The next 7 helical transmembrane spans lie at 42–62, 76–96, 103–123, 136–156, 172–192, 209–229, and 237–257; these read YVLF…YMFL, IFHI…LKPI, PQYL…GVYF, CLTI…RSGA, IQFS…LEIW, QFLT…WAVI, and WVYF…YFQM.

It belongs to the UppP family.

The protein localises to the cell inner membrane. The enzyme catalyses di-trans,octa-cis-undecaprenyl diphosphate + H2O = di-trans,octa-cis-undecaprenyl phosphate + phosphate + H(+). In terms of biological role, catalyzes the dephosphorylation of undecaprenyl diphosphate (UPP). Confers resistance to bacitracin. In Protochlamydia amoebophila (strain UWE25), this protein is Undecaprenyl-diphosphatase.